A 106-amino-acid polypeptide reads, in one-letter code: UPF0145 protein (106 aa).

Belongs to the UPF0145 family.

The sequence is that of UPF0145 protein from Listeria grayi (Listeria murrayi).